Here is a 213-residue protein sequence, read N- to C-terminus: Peptidyl-tRNA hydrolase (213 aa).

Tyr26 contributes to the tRNA binding site. The Proton acceptor role is filled by His31. Residues Tyr78, Asn80, and Asn126 each coordinate tRNA.

It belongs to the PTH family. Monomer.

Its subcellular location is the cytoplasm. It catalyses the reaction an N-acyl-L-alpha-aminoacyl-tRNA + H2O = an N-acyl-L-amino acid + a tRNA + H(+). Its function is as follows. Hydrolyzes ribosome-free peptidyl-tRNAs (with 1 or more amino acids incorporated), which drop off the ribosome during protein synthesis, or as a result of ribosome stalling. In terms of biological role, catalyzes the release of premature peptidyl moieties from peptidyl-tRNA molecules trapped in stalled 50S ribosomal subunits, and thus maintains levels of free tRNAs and 50S ribosomes. This chain is Peptidyl-tRNA hydrolase, found in Nostoc punctiforme (strain ATCC 29133 / PCC 73102).